The following is a 97-amino-acid chain: Small, acid-soluble spore protein gamma-type (97 aa).

Polar residues predominate over residues 1–42; that stretch reads MAKQTNKTASGTSTQHVKQQNAQASKNNFGTEFGSETNVQEV. The tract at residues 1-97 is disordered; sequence MAKQTNKTAS…KNQNSGKYQG (97 aa). Repeats lie at residues 23-56 and 58-91; these read QASKNNFGTEFGSETNVQEVKQQNAQAAANKSQN and QASKNNFGTEFASETSAQEVRQQNAQAQAKKNQN. Positions 43–63 are enriched in low complexity; it reads KQQNAQAAANKSQNAQASKNN. Positions 69–78 are enriched in polar residues; sequence ASETSAQEVR. Low complexity predominate over residues 79–91; sequence QQNAQAQAKKNQN.

The protein belongs to the gamma-type SASP family.

Functionally, SASP are proteins degraded in the first minutes of spore germination and provide amino acids for both new protein synthesis and metabolism. These proteins may be involved in dormant spore's high resistance to UV light. In Priestia megaterium (Bacillus megaterium), this protein is Small, acid-soluble spore protein gamma-type (sasP-B).